Reading from the N-terminus, the 208-residue chain is uncharacterized protein (208 aa).

Disordered stretches follow at residues 74–117 (FEYK…RDSP) and 181–208 (ESKLGSSEDSGTDRFSSNTSGSSGRKFK). The span at 184–208 (LGSSEDSGTDRFSSNTSGSSGRKFK) shows a compositional bias: polar residues.

This is an uncharacterized protein from Mus musculus (Mouse).